Consider the following 459-residue polypeptide: Siroheme synthase (459 aa).

The tract at residues 1 to 204 (MDHLPIFCQL…ADEKAVNATT (204 aa)) is precorrin-2 dehydrogenase /sirohydrochlorin ferrochelatase. Residues 22–23 (DV) and 43–44 (LT) each bind NAD(+). Position 128 is a phosphoserine (Ser-128). The uroporphyrinogen-III C-methyltransferase stretch occupies residues 216 to 459 (GEVVLVGAGP…KLNWFSNYYD (244 aa)). Pro-225 lines the S-adenosyl-L-methionine pocket. The active-site Proton acceptor is Asp-248. Lys-270 serves as the catalytic Proton donor. S-adenosyl-L-methionine-binding positions include 301–303 (GGD), Ile-306, 331–332 (TA), Met-382, and Gly-411.

The protein in the N-terminal section; belongs to the precorrin-2 dehydrogenase / sirohydrochlorin ferrochelatase family. It in the C-terminal section; belongs to the precorrin methyltransferase family.

The enzyme catalyses uroporphyrinogen III + 2 S-adenosyl-L-methionine = precorrin-2 + 2 S-adenosyl-L-homocysteine + H(+). It carries out the reaction precorrin-2 + NAD(+) = sirohydrochlorin + NADH + 2 H(+). The catalysed reaction is siroheme + 2 H(+) = sirohydrochlorin + Fe(2+). Its pathway is cofactor biosynthesis; adenosylcobalamin biosynthesis; precorrin-2 from uroporphyrinogen III: step 1/1. It participates in cofactor biosynthesis; adenosylcobalamin biosynthesis; sirohydrochlorin from precorrin-2: step 1/1. It functions in the pathway porphyrin-containing compound metabolism; siroheme biosynthesis; precorrin-2 from uroporphyrinogen III: step 1/1. The protein operates within porphyrin-containing compound metabolism; siroheme biosynthesis; siroheme from sirohydrochlorin: step 1/1. Its pathway is porphyrin-containing compound metabolism; siroheme biosynthesis; sirohydrochlorin from precorrin-2: step 1/1. Multifunctional enzyme that catalyzes the SAM-dependent methylations of uroporphyrinogen III at position C-2 and C-7 to form precorrin-2 via precorrin-1. Then it catalyzes the NAD-dependent ring dehydrogenation of precorrin-2 to yield sirohydrochlorin. Finally, it catalyzes the ferrochelation of sirohydrochlorin to yield siroheme. This Salmonella agona (strain SL483) protein is Siroheme synthase.